Here is a 442-residue protein sequence, read N- to C-terminus: Glutamate--tRNA ligase 1 (442 aa).

The short motif at 9-19 (PSPTGKLHVGN) is the 'HIGH' region element. The short motif at 240–244 (KLSKR) is the 'KMSKS' region element. Lysine 243 is a binding site for ATP.

Belongs to the class-I aminoacyl-tRNA synthetase family. Glutamate--tRNA ligase type 1 subfamily. Monomer.

The protein localises to the cytoplasm. The enzyme catalyses tRNA(Glu) + L-glutamate + ATP = L-glutamyl-tRNA(Glu) + AMP + diphosphate. Its function is as follows. Catalyzes the attachment of glutamate to tRNA(Glu) in a two-step reaction: glutamate is first activated by ATP to form Glu-AMP and then transferred to the acceptor end of tRNA(Glu). The polypeptide is Glutamate--tRNA ligase 1 (Novosphingobium aromaticivorans (strain ATCC 700278 / DSM 12444 / CCUG 56034 / CIP 105152 / NBRC 16084 / F199)).